The primary structure comprises 439 residues: Cln5-like protein 3 (439 aa).

Positions 1–24 (MKNMLNIILTLTIIFIGLIKISIS) are cleaved as a signal peptide. Asparagine 93, asparagine 112, asparagine 122, asparagine 138, asparagine 168, asparagine 219, asparagine 268, asparagine 289, asparagine 304, and asparagine 359 each carry an N-linked (GlcNAc...) asparagine glycan. Residues 371 to 391 (IIFISIAIGFGVVIILYISIG) traverse the membrane as a helical segment.

It belongs to the CLN5 family.

It localises to the membrane. In Dictyostelium discoideum (Social amoeba), this protein is Cln5-like protein 3 (cln5lc).